The following is a 36-amino-acid chain: Pancreatic polypeptide (36 aa).

The residue at position 36 (Y36) is a Tyrosine amide.

It belongs to the NPY family.

The protein resides in the secreted. Hormone secreted by pancreatic cells that acts as a regulator of pancreatic and gastrointestinal functions probably by signaling through the G protein-coupled receptor NPY4R2. This is Pancreatic polypeptide (PPY) from Ceratotherium simum (White rhinoceros).